Consider the following 162-residue polypeptide: Shikimate kinase (162 aa).

11–16 (GSGKSS) is a binding site for ATP. S15 lines the Mg(2+) pocket. The substrate site is built by D33, R57, and G80. Residue R116 coordinates ATP. R132 is a binding site for substrate.

Belongs to the shikimate kinase family. In terms of assembly, monomer. The cofactor is Mg(2+).

The protein resides in the cytoplasm. It carries out the reaction shikimate + ATP = 3-phosphoshikimate + ADP + H(+). It functions in the pathway metabolic intermediate biosynthesis; chorismate biosynthesis; chorismate from D-erythrose 4-phosphate and phosphoenolpyruvate: step 5/7. In terms of biological role, catalyzes the specific phosphorylation of the 3-hydroxyl group of shikimic acid using ATP as a cosubstrate. The polypeptide is Shikimate kinase (Helicobacter acinonychis (strain Sheeba)).